Reading from the N-terminus, the 160-residue chain is MIKKRKKKSYTSVYALGQYISMSAHKARRVIDQIRGRSYEEALMILELMPYRGCYPIFKLVYSAAANASHNKGFKETNLVISKAEVNQGNTVKKLKPRARGRSYPIKRSTCHITIVLEDISFYQQYEEYLMYLKKPGCRNENRNLTCYDTYSSGGLWDKK.

The protein belongs to the universal ribosomal protein uL22 family. Part of the 50S ribosomal subunit.

The protein resides in the plastid. The protein localises to the chloroplast. In terms of biological role, this protein binds specifically to 23S rRNA. The globular domain of the protein is located near the polypeptide exit tunnel on the outside of the subunit, while an extended beta-hairpin is found that lines the wall of the exit tunnel in the center of the 70S ribosome. The chain is Large ribosomal subunit protein uL22c (rpl22) from Olimarabidopsis pumila (Dwarf rocket).